A 314-amino-acid chain; its full sequence is Cytochrome c biogenesis protein CcsA (314 aa).

Transmembrane regions (helical) follow at residues 15–35, 48–68, 73–93, 102–122, 148–168, 216–236, 250–267, and 277–297; these read VSFI…ISLI, LITI…WIIS, ISNL…GQLL, IIPA…CFVL, VMLS…VLFI, SILV…IWAN, TWAF…HMRI, and ALLA…VNFL.

The protein belongs to the CcmF/CycK/Ccl1/NrfE/CcsA family. May interact with ccs1.

The protein localises to the cellular thylakoid membrane. In terms of biological role, required during biogenesis of c-type cytochromes (cytochrome c6 and cytochrome f) at the step of heme attachment. This is Cytochrome c biogenesis protein CcsA from Prochlorococcus marinus subsp. pastoris (strain CCMP1986 / NIES-2087 / MED4).